The primary structure comprises 144 residues: Large ribosomal subunit protein uL11 (144 aa).

The protein belongs to the universal ribosomal protein uL11 family. As to quaternary structure, part of the ribosomal stalk of the 50S ribosomal subunit. Interacts with L10 and the large rRNA to form the base of the stalk. L10 forms an elongated spine to which L12 dimers bind in a sequential fashion forming a multimeric L10(L12)X complex. Post-translationally, one or more lysine residues are methylated.

In terms of biological role, forms part of the ribosomal stalk which helps the ribosome interact with GTP-bound translation factors. The sequence is that of Large ribosomal subunit protein uL11 from Granulibacter bethesdensis (strain ATCC BAA-1260 / CGDNIH1).